The sequence spans 408 residues: Snake venom metalloproteinase BaP1 (408 aa).

The signal sequence occupies residues 1 to 20 (MIEVLLVTICLAVFPYQGSS). Positions 21 to 191 (IILESGNVND…KASQSNLTPE (171 aa)) are excised as a propeptide. Position 192 is a pyrrolidone carboxylic acid (Q192). Residues 198–394 (RYIELAVVAD…HNPQCILNKP (197 aa)) form the Peptidase M12B domain. 3 disulfide bridges follow: C309–C389, C349–C373, and C351–C356. H334 provides a ligand contact to Zn(2+). E335 is a catalytic residue. 2 residues coordinate Zn(2+): H338 and H344. A propeptide spanning residues 395-408 (LLTVSGNELLEAGE) is cleaved from the precursor.

It belongs to the venom metalloproteinase (M12B) family. P-I subfamily. Monomer. Zn(2+) serves as cofactor. Expressed by the venom gland.

It is found in the secreted. With respect to regulation, inhibited by EDTA, partially inhibited by o-phenantropine, and not inhibited by PMSF, pepstatin A, and aprotinin. In terms of biological role, zinc metalloprotease that exhibits a weak hemorrhagic activity (with a minimum hemorrhagic dose of 20 ug by intradermal and intramuscular injection into mice). The basal membrane components collagen (all chains of type IV) (COL4A4), laminin and nidogen are all degraded by this toxin. Rapidly degrades the Aalpha-chain (FGA) of fibrinogen, and later on, degrades the Bbeta-chain (FGB) of fibrinogen. Also activates the complement system, and induces rat neutrophil chemotaxis. Induces edema in mouse food pad and shows a mild myotoxicity. This is Snake venom metalloproteinase BaP1 from Bothrops asper (Terciopelo).